Here is a 545-residue protein sequence, read N- to C-terminus: Phospholipase B-like 1 (545 aa).

Residues 1–35 (MSRHSQDERLGLPQPPALLPLLLLLLAVAVPLSQA) form the signal peptide. N-linked (GlcNAc...) (high mannose) asparagine; alternate glycosylation is present at asparagine 68. N-linked (GlcNAc...) (hybrid) asparagine; alternate glycosylation occurs at asparagine 68. Positions 206–224 (LSPTKNSSLKFFKRWDMGH) are cleaved as a propeptide — removed in mature form. N-linked (GlcNAc...) (high mannose) asparagine; alternate glycans are attached at residues asparagine 305, asparagine 363, and asparagine 408. Asparagine 305, asparagine 363, and asparagine 408 each carry an N-linked (GlcNAc...) (hybrid) asparagine; alternate glycan. Disulfide bonds link cysteine 467-cysteine 472 and cysteine 471-cysteine 486. An N-linked (GlcNAc...) (high mannose) asparagine; alternate glycan is attached at asparagine 523. N-linked (GlcNAc...) (hybrid) asparagine; alternate glycosylation is present at asparagine 523.

Belongs to the phospholipase B-like family. In terms of assembly, may form a homodimer, each monomer is composed of a chain A and a chain B. Post-translationally, the maturation cleavages that produces chains A and B are required to open the putative substrate binding pocket. Both chains A and B remain associated in the mature protein.

The protein resides in the lysosome. Its function is as follows. Exhibits a weak phospholipase activity, acting on various phospholipids, including phosphatidylcholine, phosphatidylinositol, phosphatidylethanolamine and lysophospholipids. However, in view of the small size of the putative binding pocket, it has been proposed that it may act rather as an amidase or a peptidase. The sequence is that of Phospholipase B-like 1 (PLBD1) from Bos taurus (Bovine).